A 209-amino-acid chain; its full sequence is RNA chaperone ProQ (209 aa).

The segment at 101–155 is disordered; that stretch reads LAESKAKVQARRKEQAQKAREEGKAKAKPAANKKPQQPRRTNKPKVQKPTKPVET. Residues 111-125 are compositionally biased toward basic and acidic residues; sequence RRKEQAQKAREEGKA. The span at 136 to 148 shows a compositional bias: basic residues; that stretch reads QQPRRTNKPKVQK.

Belongs to the ProQ family.

The protein resides in the cytoplasm. In terms of biological role, RNA chaperone with significant RNA binding, RNA strand exchange and RNA duplexing activities. The polypeptide is RNA chaperone ProQ (Vibrio parahaemolyticus serotype O3:K6 (strain RIMD 2210633)).